The sequence spans 39 residues: RapF inhibitor (39 aa).

A propeptide spanning residues 1–34 (MKLKSKLLLSCLALSTVFVATTIANAPTHQIEVA) is cleaved from the precursor.

Belongs to the Phr family. As to quaternary structure, interacts with RapF and inhibits its interaction with ComA. In terms of processing, contains a predicted signal peptide cleavage site in the N-terminal region, however the propeptide is probably subject to only one processing event, at the N-terminal end of the mature peptide.

The protein resides in the secreted. Its subcellular location is the cytoplasm. Signaling molecule involved in the regulation of genetic competence development. Secreted during production, but the mature peptide acts intracellularly, indicating that it needs to be imported into the cell to function. Stimulates expression of the genes controlled by ComA, a transcriptional factor that regulates the development of genetic competence. Acts by inhibiting RapF, which regulates the activity of ComA. In Bacillus subtilis (strain 168), this protein is RapF inhibitor (phrF).